Here is a 166-residue protein sequence, read N- to C-terminus: UPF0254 protein Maeo_0668 (166 aa).

This sequence belongs to the UPF0254 family.

This chain is UPF0254 protein Maeo_0668, found in Methanococcus aeolicus (strain ATCC BAA-1280 / DSM 17508 / OCM 812 / Nankai-3).